The sequence spans 205 residues: Latherin (205 aa).

Cysteine 133 and cysteine 176 are disulfide-bonded.

This sequence belongs to the BPI/LBP/Plunc superfamily. Plunc family. Monomer.

It is found in the secreted. In terms of biological role, major protein in sweat, has surfactant properties. The polypeptide is Latherin (LATH) (Equus quagga burchellii (Burchell's zebra)).